Consider the following 758-residue polypeptide: Spastin (758 aa).

The segment at 1–103 (MVRTKNQSSS…SPRSGHHHSY (103 aa)) is disordered. The Cytoplasmic portion of the chain corresponds to 1–121 (MVRTKNQSSS…KQNLYVVSFP (121 aa)). The tract at residues 1 to 159 (MVRTKNQSSS…VIYRPHRRDC (159 aa)) is interaction with atl. The tract at residues 1-210 (MVRTKNQSSS…RPIQPLEMAA (210 aa)) is required for localization to punctate cytoplasmic foci. Composition is skewed to low complexity over residues 8–28 (SSSSSASSSSTKSPIKSSSGA), 43–58 (RSSSASNVAAVVAGGS), 66–76 (SSNRRSPGSSP), and 85–95 (TDDLTPTTCSP). The helical intramembrane region spans 122-142 (IIFLFNVLRSLIYQLFCIFRY). Topologically, residues 143 to 758 (LYGASTKVIY…WSQDYGDITI (616 aa)) are cytoplasmic. 2 stretches are compositionally biased toward polar residues: residues 169-180 (SKEQQQSLNHPS) and 189-198 (QEQQLSNQPQ). The segment at 169 to 202 (SKEQQQSLNHPSELNREGDGQEQQLSNQPQRFRP) is disordered. Residues 208-758 (MAANRPGGGY…WSQDYGDITI (551 aa)) are sufficient for interaction with microtubules and microtubule severing. The MIT domain maps to 233–308 (HRRAFEYISK…SMARDRLHFL (76 aa)). Residues 353–454 (RVRSSGYGPK…GPSGSGASTP (102 aa)) are disordered. Polar residues-rich tracts occupy residues 390–406 (NKSQTLPRNLGSKTSVG) and 425–454 (QFSSGRNTPPQRSRTPINNNGPSGSGASTP). Phosphothreonine is present on T439. The segment at 443-455 (NNGPSGSGASTPV) is required for interaction with microtubules. 523–530 (GPPGNGKT) contributes to the ATP binding site.

It belongs to the AAA ATPase family. Spastin subfamily. Homohexamer. The homohexamer is stabilized by ATP-binding. The homohexamer may adopt a ring conformation through which microtubules pass prior to being severed. Interacts with microtubules. Interacts with atl; may be involved in microtubule dynamics.

It is found in the membrane. It localises to the cytoplasm. The protein resides in the cytoskeleton. Its subcellular location is the microtubule organizing center. The protein localises to the centrosome. It is found in the chromosome. It localises to the lipid droplet. The enzyme catalyses n ATP + n H2O + a microtubule = n ADP + n phosphate + (n+1) alpha/beta tubulin heterodimers.. Its function is as follows. ATP-dependent microtubule severing protein. Stimulates microtubule minus-end depolymerization and poleward microtubule flux in the mitotic spindle. Regulates microtubule stability in the neuromuscular junction synapse. Involved in lipid metabolism by regulating the size and distribution of lipid droplets. Involved in axon regeneration by regulating microtubule severing. This chain is Spastin, found in Drosophila melanogaster (Fruit fly).